The primary structure comprises 153 residues: MGPDLRCFPLLLLLLGLWWSVRPLCAIPKNLTRAQWFTIQHIQPSPLQCNKAMNSVNNYTWHCKPQNTFLHDSFQDVATACNLPNITCKNGQNNCHQSAKPVSLTQCSFTGGNYPNCRYKDAAQYKFFIVACDPPQKGDPPYPFVPVHLDKII.

The first 26 residues, 1–26, serve as a signal peptide directing secretion; that stretch reads MGPDLRCFPLLLLLLGLWWSVRPLCA. A glycan (N-linked (GlcNAc...) asparagine) is linked at N30. H41 serves as the catalytic Proton acceptor. Cystine bridges form between C49–C107, C63–C117, C81–C132, and C88–C95. Residue N58 is glycosylated (N-linked (GlcNAc...) asparagine). 64–68 provides a ligand contact to substrate; that stretch reads KPQNT. An N-linked (GlcNAc...) asparagine glycan is attached at N85. K89 provides a ligand contact to substrate. H148 serves as the catalytic Proton donor.

Belongs to the pancreatic ribonuclease family. Interacts (via N-terminus) with bacterial lipopolysaccharide (LPS). In terms of tissue distribution, kidney.

The protein resides in the secreted. The protein localises to the lysosome. It localises to the cytoplasmic granule. Its function is as follows. Ribonuclease which shows a preference for the pyrimidines uridine and cytosine. Has potent antibacterial activity against a range of Gram-positive and Gram-negative bacteria, including P.aeruginosa, A.baumanii, M.luteus, S.aureus, E.faecalis, E.faecium, S.saprophyticus and E.coli. Causes loss of bacterial membrane integrity, and also promotes agglutination of Gram-negative bacteria. Probably contributes to urinary tract sterility. Bactericidal activity is independent of RNase activity. This is Ribonuclease K3 (RNASE6) from Sus scrofa (Pig).